We begin with the raw amino-acid sequence, 162 residues long: Mitochondrial fission process protein 1 (162 aa).

3 consecutive transmembrane segments (helical) span residues serine 36–alanine 56, alanine 81–phenylalanine 101, and threonine 128–valine 148.

This sequence belongs to the MTFP1 family.

The protein localises to the mitochondrion inner membrane. Functionally, involved in the mitochondrial division probably by regulating membrane fission. Loss-of-function leads to apoptosis. In Caenorhabditis briggsae, this protein is Mitochondrial fission process protein 1.